The sequence spans 449 residues: UNC93-like protein MFSD11 (449 aa).

Residues 8–28 (LFNIIILGVAFMFMFTAFQTC) traverse the membrane as a helical segment. N-linked (GlcNAc...) asparagine glycosylation occurs at N40. Helical transmembrane passes span 53–73 (AIIY…VAIV), 74–94 (GPQL…AVFI), 96–116 (PFPW…AVLW), 138–158 (IFWA…YFAW), and 170–190 (RTVF…FFLI). S204 is subject to Phosphoserine. Transmembrane regions (helical) follow at residues 239-259 (MLLL…FSGV), 277-297 (LIGL…SLFG), 309-329 (PVVL…FLNM), 359-379 (FLLG…LGFL), 385-405 (APAF…AFFY), and 410-430 (LLHW…ISFF).

It belongs to the unc-93 family.

The protein localises to the membrane. The polypeptide is UNC93-like protein MFSD11 (MFSD11) (Macaca fascicularis (Crab-eating macaque)).